The sequence spans 139 residues: GSK3B-interacting protein (139 aa).

The tract at residues 41 to 45 is required for PRKAR2A interaction; contributes to a protective effect against H(2)O(2)-induced apoptosis; it reads VNDVL. The interval 115–139 is interaction with GSK3B and acts as a GSK3B inhibitor; sequence SPAYREAFGNALLQRLEALKREGQS.

Belongs to the GSKIP family. Forms a complex composed of PRKAR2A or PRKAR2B, GSK3B and GSKIP through GSKIP interaction; facilitates PKA-induced phosphorylation of GSK3B leading to GSK3B inactivation; recruits DNM1L through GSK3B for PKA-mediated phosphorylation of DNM1L; promotes beta-catenin degradation through GSK3B-induced phosphorylation of beta-catenin; stabilizes beta-catenin and enhances Wnt-induced signaling through PKA-induced phosphorylation of beta-catenin. Interacts with GSK3B; induces GSK3B-mediated phosphorylation of GSKIP and inhibits GSK3B kinase activity. Post-translationally, phosphorylated by GSK3B.

The protein resides in the cytoplasm. It is found in the nucleus. In terms of biological role, A-kinase anchoring protein for GSK3B and PKA that regulates or facilitates their kinase activity towards their targets. The ternary complex enhances Wnt-induced signaling by facilitating the GSK3B- and PKA-induced phosphorylation of beta-catenin leading to beta-catenin degradation and stabilization respectively. Upon cAMP activation, the ternary complex contributes to neuroprotection against oxidative stress-induced apoptosis by facilitating the PKA-induced phosphorylation of DML1 and PKA-induced inactivation of GSK3B. During neurite outgrowth promotes neuron proliferation; while increases beta-catenin-induced transcriptional activity through GSK3B kinase activity inhibition, reduces N-cadherin level to promote cell cycle progression. May play a role in cleft palate formation and is required for postnatal life through modulation of the activity of GSK3B during development. The protein is GSK3B-interacting protein of Bos taurus (Bovine).